A 484-amino-acid polypeptide reads, in one-letter code: MYSRIVLNDVEKKVVNLLKKTADFIESKSSSSSSLEVRLAGGWVRDKLLGLSSDDLDVTLNKVTGVDFANSIFEYVHSLDSDSVIPYKDALGKLTVNPDQSKHLETATLSLFDLDIDFVGLRAESYDDKSRIPSVTPGTVETDALRRDFTVNTLFFNIRTEKIEDITKRGYKDLQTKVLVTPISPLQSFLEDPLRILRGIRFASRFEFTIDPSVVSAIQDPKVCKAFEKKVSKERVGEEIEKMLKGANAKLALQLLYSTNTYQFTFDTLPAEKEFQIPKALEATESLFQSLALTFPKLMKLSEDEKIGLWLYVALIPWSSQTVMVKKKQFYIPAIIAKDKLKLRSTYVNQLNQCCTFNPIFDELVNDTSTKNCSSIGSLIRQLNKSWEVVFLTSVIYSCCKTPAASVSNTFSSYKSLYDFIYDKNLQNAYNMKPLLDGKQIMKNVGVKPGPQLKETMDNMISWQFKHPEGSVEDCVAYLQSLKI.

A B/A element motif is present at residues 122–124 (RAE). A flexible loop region spans residues 125–142 (SYDDKSRIPSVTPGTVET). An ERhxxExxxhh motif motif is present at residues 234-244 (ERVGEEIEKML).

This sequence belongs to the tRNA nucleotidyltransferase/poly(A) polymerase family.

The protein localises to the cytoplasm. It catalyses the reaction a tRNA with a 3' CC end + ATP = a tRNA with a 3' CCA end + diphosphate. TRNA nucleotidyltransferase involved in the synthesis of the tRNA CCA terminus. In contrast to what is usually observed in eukaryotes for which one enzyme synthesizes the whole tRNA CCA terminus, in S.pombe, cca1 specifically adds two cytidine residues to a tRNA substrate lacking this sequence while cca2 specifically adds the terminal adenosine residue thereby completing the CCA sequence. The sequence is that of tRNA nucleotidyltransferase cca2 from Schizosaccharomyces pombe (strain 972 / ATCC 24843) (Fission yeast).